The following is a 90-amino-acid chain: Small ribosomal subunit protein uS19 (90 aa).

This sequence belongs to the universal ribosomal protein uS19 family.

In terms of biological role, protein S19 forms a complex with S13 that binds strongly to the 16S ribosomal RNA. This Clostridium beijerinckii (strain ATCC 51743 / NCIMB 8052) (Clostridium acetobutylicum) protein is Small ribosomal subunit protein uS19.